We begin with the raw amino-acid sequence, 155 residues long: 6,7-dimethyl-8-ribityllumazine synthase (155 aa).

Residues Phe-23, 57–59 (AFE), and 81–83 (AVI) contribute to the 5-amino-6-(D-ribitylamino)uracil site. Residue 86-87 (ST) coordinates (2S)-2-hydroxy-3-oxobutyl phosphate. Residue His-89 is the Proton donor of the active site. Phe-114 is a binding site for 5-amino-6-(D-ribitylamino)uracil. Arg-128 serves as a coordination point for (2S)-2-hydroxy-3-oxobutyl phosphate.

Belongs to the DMRL synthase family.

It carries out the reaction (2S)-2-hydroxy-3-oxobutyl phosphate + 5-amino-6-(D-ribitylamino)uracil = 6,7-dimethyl-8-(1-D-ribityl)lumazine + phosphate + 2 H2O + H(+). The protein operates within cofactor biosynthesis; riboflavin biosynthesis; riboflavin from 2-hydroxy-3-oxobutyl phosphate and 5-amino-6-(D-ribitylamino)uracil: step 1/2. Catalyzes the formation of 6,7-dimethyl-8-ribityllumazine by condensation of 5-amino-6-(D-ribitylamino)uracil with 3,4-dihydroxy-2-butanone 4-phosphate. This is the penultimate step in the biosynthesis of riboflavin. The protein is 6,7-dimethyl-8-ribityllumazine synthase of Trichlorobacter lovleyi (strain ATCC BAA-1151 / DSM 17278 / SZ) (Geobacter lovleyi).